Consider the following 258-residue polypeptide: Regulatory protein RecX (258 aa).

It belongs to the RecX family.

The protein resides in the cytoplasm. Functionally, modulates RecA activity. The polypeptide is Regulatory protein RecX (Streptococcus pneumoniae (strain Hungary19A-6)).